We begin with the raw amino-acid sequence, 330 residues long: NADH-quinone oxidoreductase subunit H (330 aa).

Helical transmembrane passes span 3 to 23 (AAFV…FSAL), 76 to 96 (PVFM…MAAI), 118 to 138 (VGLL…LLAG), 161 to 181 (EVVT…ISLV), 188 to 208 (AGGM…LFLI), 244 to 264 (FFIG…LIFL), 272 to 292 (FIPG…LFLW), and 307 to 327 (WLCW…TGIV).

It belongs to the complex I subunit 1 family. In terms of assembly, NDH-1 is composed of 14 different subunits. Subunits NuoA, H, J, K, L, M, N constitute the membrane sector of the complex.

Its subcellular location is the cell inner membrane. The enzyme catalyses a quinone + NADH + 5 H(+)(in) = a quinol + NAD(+) + 4 H(+)(out). Its function is as follows. NDH-1 shuttles electrons from NADH, via FMN and iron-sulfur (Fe-S) centers, to quinones in the respiratory chain. The immediate electron acceptor for the enzyme in this species is believed to be ubiquinone. Couples the redox reaction to proton translocation (for every two electrons transferred, four hydrogen ions are translocated across the cytoplasmic membrane), and thus conserves the redox energy in a proton gradient. This subunit may bind ubiquinone. The polypeptide is NADH-quinone oxidoreductase subunit H (Nitratiruptor sp. (strain SB155-2)).